Here is a 165-residue protein sequence, read N- to C-terminus: Shikimate kinase (165 aa).

11-16 (GAGKTT) contributes to the ATP binding site. A Mg(2+)-binding site is contributed by T15. Positions 33, 57, and 78 each coordinate substrate. Residue R116 coordinates ATP. R134 contacts substrate.

This sequence belongs to the shikimate kinase family. As to quaternary structure, monomer. The cofactor is Mg(2+).

It localises to the cytoplasm. It carries out the reaction shikimate + ATP = 3-phosphoshikimate + ADP + H(+). Its pathway is metabolic intermediate biosynthesis; chorismate biosynthesis; chorismate from D-erythrose 4-phosphate and phosphoenolpyruvate: step 5/7. Catalyzes the specific phosphorylation of the 3-hydroxyl group of shikimic acid using ATP as a cosubstrate. This chain is Shikimate kinase, found in Bacillus cereus (strain AH187).